The following is a 120-amino-acid chain: Large ribosomal subunit protein uL22 (120 aa).

It belongs to the universal ribosomal protein uL22 family. As to quaternary structure, part of the 50S ribosomal subunit.

This protein binds specifically to 23S rRNA; its binding is stimulated by other ribosomal proteins, e.g. L4, L17, and L20. It is important during the early stages of 50S assembly. It makes multiple contacts with different domains of the 23S rRNA in the assembled 50S subunit and ribosome. Functionally, the globular domain of the protein is located near the polypeptide exit tunnel on the outside of the subunit, while an extended beta-hairpin is found that lines the wall of the exit tunnel in the center of the 70S ribosome. The protein is Large ribosomal subunit protein uL22 of Corynebacterium efficiens (strain DSM 44549 / YS-314 / AJ 12310 / JCM 11189 / NBRC 100395).